Here is a 501-residue protein sequence, read N- to C-terminus: Cilia- and flagella-associated protein 45 (501 aa).

Residues 75–114 (MTAEDVAAAKREAEAKREQLQAVSKARKEKMLKLEEEAKK) are a coiled coil.

It belongs to the CFAP45 family.

Its subcellular location is the cell projection. It is found in the cilium. The protein resides in the flagellum. The protein is Cilia- and flagella-associated protein 45 of Chlamydomonas reinhardtii (Chlamydomonas smithii).